We begin with the raw amino-acid sequence, 302 residues long: Methionyl-tRNA formyltransferase (302 aa).

Position 103–106 (103–106) interacts with (6S)-5,6,7,8-tetrahydrofolate; the sequence is SLLP.

It belongs to the Fmt family.

The catalysed reaction is L-methionyl-tRNA(fMet) + (6R)-10-formyltetrahydrofolate = N-formyl-L-methionyl-tRNA(fMet) + (6S)-5,6,7,8-tetrahydrofolate + H(+). Attaches a formyl group to the free amino group of methionyl-tRNA(fMet). The formyl group appears to play a dual role in the initiator identity of N-formylmethionyl-tRNA by promoting its recognition by IF2 and preventing the misappropriation of this tRNA by the elongation apparatus. This is Methionyl-tRNA formyltransferase from Pseudothermotoga lettingae (strain ATCC BAA-301 / DSM 14385 / NBRC 107922 / TMO) (Thermotoga lettingae).